Reading from the N-terminus, the 124-residue chain is Period circadian protein (124 aa).

The interval 30 to 124 is disordered; the sequence is TAPVELDPPK…TVTLTESLLN (95 aa). Residues 71–96 show a composition bias toward low complexity; sequence SGNFTTGSNVRMSSVTNTSNAGTGTS. Residues 97 to 107 show a composition bias toward gly residues; it reads SAGGNGNGGSG.

In terms of assembly, forms a heterodimer with timeless (TIM); the complex then translocates into the nucleus. Post-translationally, phosphorylated with a circadian rhythmicity, probably by the double-time protein (dbt). Phosphorylation could be implicated in the stability of per monomer and in the formation of heterodimer per-tim.

Its subcellular location is the nucleus. It is found in the cytoplasm. It localises to the perinuclear region. Its function is as follows. Essential for biological clock functions. Determines the period length of circadian and ultradian rhythms; an increase in PER dosage leads to shortened circadian rhythms and a decrease leads to lengthened circadian rhythms. Essential for the circadian rhythmicity of locomotor activity, eclosion behavior, and for the rhythmic component of the male courtship song that originates in the thoracic nervous system. The biological cycle depends on the rhythmic formation and nuclear localization of the TIM-PER complex. Light induces the degradation of TIM, which promotes elimination of PER. Nuclear activity of the heterodimer coordinatively regulates PER and TIM transcription through a negative feedback loop. Behaves as a negative element in circadian transcriptional loop. Does not appear to bind DNA, suggesting indirect transcriptional inhibition. This is Period circadian protein (per) from Hirtodrosophila pictiventris (Fruit fly).